The chain runs to 725 residues: IML2-like protein YKR018C (725 aa).

At T196 the chain carries Phosphothreonine. S246, S377, and S380 each carry phosphoserine.

The protein belongs to the IML2 family.

The protein resides in the cytoplasm. Its subcellular location is the nucleus. In Saccharomyces cerevisiae (strain ATCC 204508 / S288c) (Baker's yeast), this protein is IML2-like protein YKR018C.